Consider the following 324-residue polypeptide: tRNA dimethylallyltransferase (324 aa).

15 to 22 contributes to the ATP binding site; the sequence is GPTATGKS. Position 17–22 (17–22) interacts with substrate; the sequence is TATGKS. An interaction with substrate tRNA region spans residues 40–43; sequence DSAQ.

Belongs to the IPP transferase family. As to quaternary structure, monomer. Mg(2+) is required as a cofactor.

It carries out the reaction adenosine(37) in tRNA + dimethylallyl diphosphate = N(6)-dimethylallyladenosine(37) in tRNA + diphosphate. In terms of biological role, catalyzes the transfer of a dimethylallyl group onto the adenine at position 37 in tRNAs that read codons beginning with uridine, leading to the formation of N6-(dimethylallyl)adenosine (i(6)A). In Moorella thermoacetica (strain ATCC 39073 / JCM 9320), this protein is tRNA dimethylallyltransferase.